A 4241-amino-acid chain; its full sequence is Intermembrane lipid transfer protein vps13E (4241 aa).

A Chorein N-terminal domain is found at Ile-5–Ser-97. Over residues Ile-120–Asp-140 the composition is skewed to low complexity. Disordered regions lie at residues Ile-120–Phe-143, Leu-234–Gln-340, Leu-942–Glu-986, Asn-1220–Pro-1256, Thr-1345–His-1369, Lys-1534–Asn-1571, Gln-2148–His-2192, and Val-2217–Asn-2282. Residues Leu-234–Ser-254 are compositionally biased toward polar residues. Residues Gln-255–Gln-264 show a composition bias toward low complexity. A compositionally biased stretch (polar residues) spans Phe-279–Ile-289. 3 stretches are compositionally biased toward low complexity: residues Ser-290–Asn-313, Gln-325–Gln-340, and Leu-942–Asn-952. Basic and acidic residues predominate over residues Asp-968–Glu-986. A compositionally biased stretch (low complexity) spans Asn-1220–Asn-1253. The segment covering Arg-1352–His-1369 has biased composition (basic residues). Composition is skewed to low complexity over residues Lys-1538–Asp-1551, Asp-1559–Asn-1571, and Gln-2148–Asn-2177. The span at Val-2178–Val-2188 shows a compositional bias: polar residues. A compositionally biased stretch (acidic residues) spans Ser-2246–Gly-2259. Positions Asp-2265 to Asn-2282 are enriched in polar residues. Residues Lys-2825–Glu-3134 enclose the SHR-BD domain. Disordered stretches follow at residues Pro-3973–Glu-4000, Tyr-4059–Gln-4094, and Lys-4109–Gly-4140. A compositionally biased stretch (low complexity) spans Thr-3974–Thr-3984. Residues Pro-3985 to Glu-4000 show a composition bias toward polar residues. Residues Ser-4128–Gly-4140 are compositionally biased toward polar residues.

Belongs to the VPS13 family.

It is found in the membrane. Mediates the transfer of lipids between membranes at organelle contact sites. The chain is Intermembrane lipid transfer protein vps13E (vps13E) from Dictyostelium discoideum (Social amoeba).